The primary structure comprises 40 residues: Large ribosomal subunit protein bL36B (40 aa).

The protein belongs to the bacterial ribosomal protein bL36 family.

The polypeptide is Large ribosomal subunit protein bL36B (Arthrobacter sp. (strain FB24)).